The chain runs to 968 residues: RNA polymerase-associated protein RapA (968 aa).

In terms of domain architecture, Helicase ATP-binding spans 164 to 334 (EVGQRHAPRV…FARLRLLDPD (171 aa)). An ATP-binding site is contributed by 177 to 184 (DEVGLGKT). Residues 280–283 (DEAH) carry the DEAH box motif. The region spanning 490 to 644 (RVEWLLNYLV…TCPTGRTIYD (155 aa)) is the Helicase C-terminal domain.

This sequence belongs to the SNF2/RAD54 helicase family. RapA subfamily. Interacts with the RNAP. Has a higher affinity for the core RNAP than for the holoenzyme. Its ATPase activity is stimulated by binding to RNAP.

Its function is as follows. Transcription regulator that activates transcription by stimulating RNA polymerase (RNAP) recycling in case of stress conditions such as supercoiled DNA or high salt concentrations. Probably acts by releasing the RNAP, when it is trapped or immobilized on tightly supercoiled DNA. Does not activate transcription on linear DNA. Probably not involved in DNA repair. This Yersinia pestis bv. Antiqua (strain Antiqua) protein is RNA polymerase-associated protein RapA.